Reading from the N-terminus, the 274-residue chain is Tyrosinase (274 aa).

The Cu cation site is built by His38, His54, His63, His190, His194, and His216.

This sequence belongs to the tyrosinase family. Requires Cu(2+) as cofactor.

It carries out the reaction 2 L-dopa + O2 = 2 L-dopaquinone + 2 H2O. It catalyses the reaction L-tyrosine + O2 = L-dopaquinone + H2O. Functionally, this is a copper-containing oxidase that functions in the formation of pigments such as melanins and other polyphenolic compounds. The protein is Tyrosinase (melC2) of Streptomyces glaucescens.